The sequence spans 243 residues: tRNA (guanine-N(1)-)-methyltransferase (243 aa).

S-adenosyl-L-methionine-binding positions include G108 and 127–132 (LGDFVL).

It belongs to the RNA methyltransferase TrmD family. As to quaternary structure, homodimer.

It is found in the cytoplasm. The catalysed reaction is guanosine(37) in tRNA + S-adenosyl-L-methionine = N(1)-methylguanosine(37) in tRNA + S-adenosyl-L-homocysteine + H(+). Functionally, specifically methylates guanosine-37 in various tRNAs. In Streptococcus pyogenes serotype M2 (strain MGAS10270), this protein is tRNA (guanine-N(1)-)-methyltransferase.